A 327-amino-acid polypeptide reads, in one-letter code: 2-methoxy-6-polyprenyl-1,4-benzoquinol methylase, mitochondrial (327 aa).

The transit peptide at 1-49 directs the protein to the mitochondrion; the sequence is MAAPRSCALWSYCGRGWSWAMRGCQLLGLRSSWPGAPLSARLLPQEKRA. Residues Thr117, Asp171, and 199-200 contribute to the S-adenosyl-L-methionine site; that span reads DA.

This sequence belongs to the class I-like SAM-binding methyltransferase superfamily. MenG/UbiE family. Component of a multi-subunit COQ enzyme complex, composed of at least COQ3, COQ4, COQ5, COQ6, COQ7 and COQ9. Interacts with PYURF; the interaction is direct, stabilizes COQ5 protein and associates PYURF with COQ enzyme complex.

Its subcellular location is the mitochondrion inner membrane. It carries out the reaction 2-methoxy-6-(all-trans-decaprenyl)benzene-1,4-diol + S-adenosyl-L-methionine = 5-methoxy-2-methyl-3-(all-trans-decaprenyl)benzene-1,4-diol + S-adenosyl-L-homocysteine + H(+). It functions in the pathway cofactor biosynthesis; ubiquinone biosynthesis. Methyltransferase required for the conversion of 2-decaprenyl-6-methoxy-1,4-benzoquinol (DDMQH2) to 2-decaprenyl-3-methyl-6-methoxy-1,4-benzoquinol (DMQH2). The sequence is that of 2-methoxy-6-polyprenyl-1,4-benzoquinol methylase, mitochondrial from Pongo abelii (Sumatran orangutan).